The primary structure comprises 63 residues: Large ribosomal subunit protein uL29 (63 aa).

Belongs to the universal ribosomal protein uL29 family.

This is Large ribosomal subunit protein uL29 from Proteus mirabilis (strain HI4320).